The following is a 516-amino-acid chain: MAHQNQHQDTIDSTEVEVWDSRTAQEVNKSLYPPAVDSPFTLNTHLSAWRWACTIILGTVLVPVRVSCIVFLLILLWPVAVLSAINLPTQPTKPIRRWRKHLIKSALVFLFRLGFFFAGFLVKVKGKKATREEAPIFVSAPHSTFFDAIAVVVAGLPSVVSDSQLARVPLAGKCILVTQPVLVKREDPNSRKTTRNEILRRVKSKMKWPQILIFPEGLCTNRSCLVTFKLGAFSPGVPVQPVLLRYPNSLDTVTWTWNGFSGFQVCMLTLSQLFTRVEVEFMPVYIPSEEEKKDPILFANTVRIKMANALKLPVTDHSLEDCKLMISAGALQLPMEAGLVEFTKISQKLKLDWDNIHKHLDQYASFAVSSKGGKIGIEAFSRYLKLPISEPLRQLFSLFDRNQDGTIDFREYVIGLTVLCNPSNTEKILQMSFKLFDLDEDGYVTERELTTMLQAAFGVPDLDVSTLFQQMAGKDSDQVSYRTFRRFALKHPAYAKLFHSYIDLQAAYIYSLPREV.

The N-linked (GlcNAc...) asparagine glycan is linked to Asn-28. Transmembrane regions (helical) follow at residues 44-64 (THLSAWRWACTIILGTVLVPV), 68-88 (CIVFLLILLWPVAVLSAINLP), and 102-122 (LIKSALVFLFRLGFFFAGFLV). Positions 142–147 (HSTFFD) match the HXXXXD motif motif. EF-hand domains lie at 387–422 (PISEPLRQLFSLFDRNQDGTIDFREYVIGLTVLCNP) and 424–459 (NTEKILQMSFKLFDLDEDGYVTERELTTMLQAAFGV). Ca(2+) is bound by residues Asp-400, Asn-402, Asp-404, Thr-406, Glu-411, Asp-437, Asp-439, Asp-441, Tyr-443, and Glu-448.

Belongs to the 1-acyl-sn-glycerol-3-phosphate acyltransferase family.

It is found in the membrane. The protein operates within lipid metabolism; phospholipid metabolism. Functionally, probable acetyltransferase. The chain is Lysophosphatidylcholine acyltransferase 2B (Lpcat2b) from Mus musculus (Mouse).